Reading from the N-terminus, the 541-residue chain is Arginine--tRNA ligase (541 aa).

The short motif at 119 to 129 is the 'HIGH' region element; that stretch reads ANPTGPLHIGH.

It belongs to the class-I aminoacyl-tRNA synthetase family. As to quaternary structure, monomer.

The protein resides in the cytoplasm. The catalysed reaction is tRNA(Arg) + L-arginine + ATP = L-arginyl-tRNA(Arg) + AMP + diphosphate. This chain is Arginine--tRNA ligase, found in Helicobacter pylori (strain HPAG1).